The chain runs to 1452 residues: MALETEAKNSNATATSDATATKASGKAKETNNTAGGKKNLNPIPNSNHQNSNQNLVNGNGTAADGPAAKKKGKKNRNKSPPEPTTEAVLSNGHAEKSTLVDAVEDNADADANANVEKPEDGGAPDAEADGEDIDLDALQDVGITVNISSPGADLLCVQLSSMELVQEIHQLLMDREETCHRTCFSLQLDNATLDNFAELKAISNLEQGSTIKVVEEPYTMREARIHVRHVRDLLKNLDPADAYNGIDCTSLTYLNTITQGDLLDKKKTRPDSVDCTPPEYVTPGVSEPPLLPLHPNVKNAKGPQALKVLTTSAWNPPPGPRKLHGDLMYLYVVTMEEKRFHISACSKGFYINQSTDDTFNPKPDNPSHLSHSLIDLLSHISPSFRRAFQTIQKRRTMRHAFERVATPYQVYQWASPTLEHTVDAIRAEDAFSSKLGYEEHIPGQTRDWNEELQTTRELPRKTLPERLLRERAIFKVHGDFVTAATRGAMAVIDGNVLAINPGEDPKMQMFIWNNIFFSLGFDVRDHYKELGGDAAAFVAPRYDLHGVRVYNAVDVEGLYTLGTVVIDYRGYRVTAQSIIPGILEREQEQSVVYGSIDFGKTVLSHPKYLELLRQAGKHLKILPHAVLNERDEPVELCSSVECKGIIGNDGRHYILDLLRTFPPDVNFLKLQDVQLSKELVDMGFPIEHRHKLCCLRQELLEAFIEDRHVSFIRIAAVHLQQLNAKKQSEKAEGNPVPALEGAEAVSKVNGADKTDVKEEKNEENEKAQSTAGDTKTAEAMVNAIREAQSNVATSNEVQAAEVVKRACAAVGSLKEKEFDFRFNPDVFSPGIRHVDGEEGTCSSLAKQKVLVQEAAEFLVLKQIPAFVKEHMTHSSPPIDGQSLTESLHSHGINVRYLGKVIKILNQMPRMDYLHRIAVLELIVRATKHIYYTYMQNTEPLHLSAAISHFLNCLLTNGPVNPAVSSEEAHKKRGNGGKHNKHKSSKGGKGQQQQQATGNQNGSSSGSSNGSSVSDWTLMTPRSLWQQIRKEAKVYWDWELDCDSIETAVSKYGILRISLLRAFCLKVGIQVLLREYNFESKHKPTFGDDDIVNVFPVVKHISPRATDAYNFYTTGQAKIQQGMFKEGYELISGALNLLNNVFGALHQENGSCLRMLARLSYLLGDAQDALAIQQRAVIMSERVNGMDHPSTILEYTHLSLYSFANGHVGMSLKLLYRARYLMVLICGEDHPEVALIDSNISLILHALGEYELSLRFIEHALKLNLKYFGDKAMPVALSYHLMARTQSCMGDFRSALNNEKETYSFYKSQLGENHEKTKDSAECLRLLTQQAVLLQRKMNDIYSSGKLTSDLPPIHITPPSMGSVLDMLNTINGILFVKISRKDIVKVRSEIEKHFKADSPENEVNDAISSIVAAANNNGEAEDAVPKDVEEQKEAGTQLTNGEKAAATEATSS.

Disordered stretches follow at residues Met-1–His-93 and Lys-266–Pro-288. Positions Lys-8 to Ser-24 are enriched in low complexity. Over residues Pro-42–Asn-59 the composition is skewed to polar residues. Residues Ala-68 to Asn-77 show a composition bias toward basic residues. Ser-272 is subject to Phosphoserine. Residues Arg-426–Leu-668 form the Clu domain. Disordered regions lie at residues Lys-726–Lys-775, Ala-962–Ser-1013, and Ala-1414–Ser-1452. Residues Gly-750–Lys-766 show a composition bias toward basic and acidic residues. Over residues Lys-970 to Lys-985 the composition is skewed to basic residues. A compositionally biased stretch (low complexity) spans Gln-990–Ser-1013. Over residues Ala-1423–Glu-1433 the composition is skewed to basic and acidic residues.

Belongs to the CLU family.

The protein resides in the cytoplasm. In terms of biological role, mRNA-binding protein involved in proper cytoplasmic distribution of mitochondria. The polypeptide is Protein clueless (Drosophila erecta (Fruit fly)).